We begin with the raw amino-acid sequence, 177 residues long: CCHC-type zinc finger nucleic acid binding protein (177 aa).

Residue S2 is modified to N-acetylserine. Residues 4 to 21 (NECFKCGRSGHWARECPT) form a CCHC-type 1 zinc finger. The residue at position 8 (K8) is an N6-acetyllysine. An omega-N-methylarginine; by PRMT1 mark is found at R25 and R27. The interval 25 to 38 (RGRGMRSRGRGGFT) is RNA-binding Arg/Gly-rich region (RGG-box). Residues R32 and R34 each carry the omega-N-methylarginine modification. S49 carries the post-translational modification Phosphoserine. CCHC-type zinc fingers lie at residues 52–69 (DICYRCGESGHLAKDCDL), 72–89 (DACYNCGRGGHIAKDCKE), 96–113 (QCCYNCGKPGHLARDCDH), 117–134 (QKCYSCGEFGHIQKDCTK), 135–152 (VKCYRCGETGHVAINCSK), and 156–173 (VNCYRCGESGHLARECTI). An omega-N-methylarginine mark is found at A73, R79, and G80.

In terms of assembly, associates with the 40S ribosomal subunit, the 80S ribosome and with polysomes. In terms of processing, arginine methylation by PRMT1 in the Arg/Gly-rich region impedes RNA binding. Expressed in the liver, kidney, spleen, testis, lung, muscle and adrenal glands.

It is found in the nucleus. Its subcellular location is the cytoplasm. The protein resides in the endoplasmic reticulum. In terms of biological role, single-stranded DNA-binding protein that preferentially binds to the sterol regulatory element (SRE) sequence 5'-GTGCGGTG-3', and thereby mediates transcriptional repression. Has a role as transactivator of the Myc promoter. Binds single-stranded RNA in a sequence-specific manner. Functionally, binds G-rich elements in target mRNA coding sequences. Prevents G-quadruplex structure formation in vitro, suggesting a role in supporting translation by resolving stable structures on mRNAs. Binds to RNA. The protein is CCHC-type zinc finger nucleic acid binding protein of Homo sapiens (Human).